The following is a 115-amino-acid chain: Large ribosomal subunit protein bL20 (115 aa).

This sequence belongs to the bacterial ribosomal protein bL20 family.

Its function is as follows. Binds directly to 23S ribosomal RNA and is necessary for the in vitro assembly process of the 50S ribosomal subunit. It is not involved in the protein synthesizing functions of that subunit. The sequence is that of Large ribosomal subunit protein bL20 from Prochlorococcus marinus (strain MIT 9313).